The following is a 264-amino-acid chain: Somatomedin-B and thrombospondin type-1 domain-containing protein (264 aa).

Positions 1 to 20 (MKTLWMVLCALARLWPGALA) are cleaved as a signal peptide. Residues 24 to 75 (EAGRCCPGRDPACFARGWRLDRVYGTCFCDQACRLTGDCCFDYDRACPARPC) form the SMB domain. Disulfide bonds link Cys28–Cys36, Cys28–Cys52, Cys36–Cys70, Cys50–Cys52, Cys50–Cys63, Cys56–Cys62, and Cys63–Cys70. Residues 74 to 125 (PCFVGEWSPWSGCAGQCQPTTRVRRRSVRQEPLNGGAPCPPLEERAGCLEYS) form the TSP type-1 domain. Residue Asn227 is glycosylated (N-linked (GlcNAc...) asparagine).

Belongs to the thrombospondin family.

Its subcellular location is the secreted. It is found in the extracellular space. The protein localises to the extracellular matrix. The protein is Somatomedin-B and thrombospondin type-1 domain-containing protein (Sbspon) of Mus musculus (Mouse).